A 142-amino-acid chain; its full sequence is Hemoglobin subunit alpha-A (142 aa).

The 141-residue stretch at 2–142 folds into the Globin domain; it reads VLSGSDKTNV…VGNVLTAKYR (141 aa). O2 is bound at residue His-59. His-88 serves as a coordination point for heme b.

The protein belongs to the globin family. As to quaternary structure, heterotetramer of two alpha chains and two beta chains. In terms of tissue distribution, red blood cells.

Its function is as follows. Involved in oxygen transport from the lung to the various peripheral tissues. In Ara ararauna (Blue-and-yellow macaw), this protein is Hemoglobin subunit alpha-A (HBAA).